We begin with the raw amino-acid sequence, 164 residues long: MPSSALLCCLIFLARVAAGQHQGTQAKDSCIHFPDSLPHMLRELRAAFSNVKTFFQMNDQLDNSLLSQSLLEDFKGYLGCQALSEMIQFYLEEVMPKAEDHGPNIKEHVNSLGEKLKTLRLRLRRCHRFLPCENKSKAVEQVKSVFNKLQEKGVYKAMREFDIF.

The N-terminal stretch at 1–18 is a signal peptide; the sequence is MPSSALLCCLIFLARVAA. Disulfide bonds link Cys-30-Cys-126 and Cys-80-Cys-132. A glycan (N-linked (GlcNAc...) asparagine) is linked at Asn-134.

This sequence belongs to the IL-10 family. Homodimer. Interacts with IL10RA and IL10RB.

It localises to the secreted. Functionally, major immune regulatory cytokine that acts on many cells of the immune system where it has profound anti-inflammatory functions, limiting excessive tissue disruption caused by inflammation. Mechanistically, IL10 binds to its heterotetrameric receptor comprising IL10RA and IL10RB leading to JAK1 and STAT2-mediated phosphorylation of STAT3. In turn, STAT3 translocates to the nucleus where it drives expression of anti-inflammatory mediators. Targets antigen-presenting cells (APCs) such as macrophages and monocytes and inhibits their release of pro-inflammatory cytokines including granulocyte-macrophage colony-stimulating factor /GM-CSF, granulocyte colony-stimulating factor/G-CSF, IL-1 alpha, IL-1 beta, IL-6, IL-8 and TNF-alpha. Also interferes with antigen presentation by reducing the expression of MHC-class II and co-stimulatory molecules, thereby inhibiting their ability to induce T cell activation. In addition, controls the inflammatory response of macrophages by reprogramming essential metabolic pathways including mTOR signaling. This Orcinus orca (Killer whale) protein is Interleukin-10 (IL10).